A 372-amino-acid chain; its full sequence is Chorismate synthase (372 aa).

Position 48 (Arg-48) interacts with NADP(+). Residues Arg-131–Ser-133, Asn-243–Ala-244, Gly-288, Lys-303–Ser-307, and Arg-329 contribute to the FMN site.

Belongs to the chorismate synthase family. Homotetramer. It depends on FMNH2 as a cofactor.

It catalyses the reaction 5-O-(1-carboxyvinyl)-3-phosphoshikimate = chorismate + phosphate. Its pathway is metabolic intermediate biosynthesis; chorismate biosynthesis; chorismate from D-erythrose 4-phosphate and phosphoenolpyruvate: step 7/7. Catalyzes the anti-1,4-elimination of the C-3 phosphate and the C-6 proR hydrogen from 5-enolpyruvylshikimate-3-phosphate (EPSP) to yield chorismate, which is the branch point compound that serves as the starting substrate for the three terminal pathways of aromatic amino acid biosynthesis. This reaction introduces a second double bond into the aromatic ring system. This is Chorismate synthase from Caulobacter vibrioides (strain ATCC 19089 / CIP 103742 / CB 15) (Caulobacter crescentus).